Reading from the N-terminus, the 424-residue chain is UPF0415 protein C7orf25 homolog (424 aa).

The protein belongs to the UPF0415 family.

The polypeptide is UPF0415 protein C7orf25 homolog (Xenopus laevis (African clawed frog)).